Here is a 377-residue protein sequence, read N- to C-terminus: WAT1-related protein At5g13670 (377 aa).

10 consecutive transmembrane segments (helical) span residues phenylalanine 9 to alanine 29, valine 38 to leucine 58, proline 64 to valine 84, threonine 99 to phenylalanine 119, valine 136 to isoleucine 156, isoleucine 187 to leucine 207, leucine 214 to isoleucine 234, leucine 251 to alanine 271, phenylalanine 279 to phenylalanine 299, and valine 303 to tryptophan 323. EamA domains follow at residues leucine 18–threonine 149 and phenylalanine 194–leucine 322.

Belongs to the drug/metabolite transporter (DMT) superfamily. Plant drug/metabolite exporter (P-DME) (TC 2.A.7.4) family.

The protein resides in the membrane. The protein is WAT1-related protein At5g13670 of Arabidopsis thaliana (Mouse-ear cress).